The following is a 259-amino-acid chain: Global transcriptional regulator CodY (259 aa).

The segment at 1–155 (MNLLEKTRKI…GATVVGMEIL (155 aa)) is GAF domain. The H-T-H motif DNA-binding region spans 203–222 (ASKIADRVGITRSVIVNALR). Position 215 is a phosphoserine (S215).

The protein belongs to the CodY family.

It is found in the cytoplasm. DNA-binding global transcriptional regulator which is involved in the adaptive response to starvation and acts by directly or indirectly controlling the expression of numerous genes in response to nutrient availability. During rapid exponential growth, CodY is highly active and represses genes whose products allow adaptation to nutrient depletion. The polypeptide is Global transcriptional regulator CodY (Lysinibacillus sphaericus (strain C3-41)).